Consider the following 251-residue polypeptide: MKRIVVKVGSHVISEENTLSFERLKNLVAFLAKLMEKYEVILVTSAAISAGHTKLDIDRKNLINKQVLAAIGQPFLISVYNELLAKFNKLGGQILLTGKDFDSRKATKHAKNAIDMMINLGILPIINENDATAIEEIVFGDNDSLSAYATHFFDADLLVILSDIDGFYDKNPSEFSDAKRLEKITHIKEEWLQATIKTGSEHGTGGIVTKLKAAKFLLEHNKKMFLASGFDLSVAKTFLLEDKQIGGTLFE.

Position 7 (lysine 7) interacts with ATP. Residues serine 45, aspartate 130, and asparagine 142 each contribute to the substrate site. Residues 162-163 (SD) and 204-210 (TGGIVTK) each bind ATP.

Belongs to the glutamate 5-kinase family.

It localises to the cytoplasm. The enzyme catalyses L-glutamate + ATP = L-glutamyl 5-phosphate + ADP. The protein operates within amino-acid biosynthesis; L-proline biosynthesis; L-glutamate 5-semialdehyde from L-glutamate: step 1/2. Functionally, catalyzes the transfer of a phosphate group to glutamate to form L-glutamate 5-phosphate. This Campylobacter jejuni subsp. jejuni serotype O:6 (strain 81116 / NCTC 11828) protein is Glutamate 5-kinase.